A 32-amino-acid polypeptide reads, in one-letter code: Photosystem II reaction center protein Psb30 (32 aa).

A helical transmembrane segment spans residues 3 to 23 (IVIVQLGSLALITLAGPIIIV).

The protein belongs to the Psb30/Ycf12 family. As to quaternary structure, PSII is composed of 1 copy each of membrane proteins PsbA, PsbB, PsbC, PsbD, PsbE, PsbF, PsbH, PsbI, PsbJ, PsbK, PsbL, PsbM, PsbT, PsbY, PsbZ, Psb30/Ycf12, peripheral proteins of the oxygen-evolving complex and a large number of cofactors. It forms dimeric complexes.

The protein localises to the plastid. Its subcellular location is the chloroplast thylakoid membrane. A core subunit of photosystem II (PSII), probably helps stabilize the reaction center. This is Photosystem II reaction center protein Psb30 from Euglena viridis (Cercaria viridis).